The chain runs to 244 residues: Protein-lysine methyltransferase METTL21E (244 aa).

Positions 1–20 are disordered; the sequence is MDLTVTHITHKETYKEPRDD. The span at 9-18 shows a compositional bias: basic and acidic residues; that stretch reads THKETYKEPR. S-adenosyl-L-methionine-binding positions include W69, 97–99, D118, W149, and A170; that span reads GAG.

The protein belongs to the methyltransferase superfamily. METTL21 family.

In terms of biological role, protein-lysine methyltransferase. This is Protein-lysine methyltransferase METTL21E (Mettl21e) from Mus musculus (Mouse).